The primary structure comprises 278 residues: Diaminopimelate epimerase (278 aa).

The substrate site is built by Asn-13, Gln-49, and Asn-68. Catalysis depends on Cys-77, which acts as the Proton donor. Substrate-binding positions include Gly-78–Asn-79, Asn-161, Asn-194, and Glu-212–Arg-213. The active-site Proton acceptor is Cys-221. Position 222 to 223 (Gly-222 to Thr-223) interacts with substrate.

Belongs to the diaminopimelate epimerase family. In terms of assembly, homodimer.

It localises to the cytoplasm. It catalyses the reaction (2S,6S)-2,6-diaminopimelate = meso-2,6-diaminopimelate. Its pathway is amino-acid biosynthesis; L-lysine biosynthesis via DAP pathway; DL-2,6-diaminopimelate from LL-2,6-diaminopimelate: step 1/1. Its function is as follows. Catalyzes the stereoinversion of LL-2,6-diaminopimelate (L,L-DAP) to meso-diaminopimelate (meso-DAP), a precursor of L-lysine and an essential component of the bacterial peptidoglycan. The sequence is that of Diaminopimelate epimerase from Nitrosomonas eutropha (strain DSM 101675 / C91 / Nm57).